A 225-amino-acid polypeptide reads, in one-letter code: MEPIKNMPRLCRTLGYEFNDQSLLEHALTHRSASSKHNERLEFLGDSILSIIISDALFHQFPKATEGDLSRMRATLVCGKMLAEIGFEFKLGDYLNLGPGELKSGGFRRESIIADAVEAIIGAVYIDSGVEKCRCLVLSWYESRLAIIQPVNQKDPKTLLQELLQGFKKPLPVYKVIDIKGEAHAQTFTVECYVEELSKPVIGIASSRRKAEQLAAADALELMKR.

One can recognise an RNase III domain in the interval 7–129 (MPRLCRTLGY…IIGAVYIDSG (123 aa)). Glu42 contacts Mg(2+). Asp46 is an active-site residue. 2 residues coordinate Mg(2+): Asp115 and Glu118. Residue Glu118 is part of the active site. The region spanning 155–225 (DPKTLLQELL…AADALELMKR (71 aa)) is the DRBM domain.

The protein belongs to the ribonuclease III family. As to quaternary structure, homodimer. Mg(2+) serves as cofactor.

Its subcellular location is the cytoplasm. The enzyme catalyses Endonucleolytic cleavage to 5'-phosphomonoester.. In terms of biological role, digests double-stranded RNA. Involved in the processing of primary rRNA transcript to yield the immediate precursors to the large and small rRNAs (23S and 16S). Processes some mRNAs, and tRNAs when they are encoded in the rRNA operon. Processes pre-crRNA and tracrRNA of type II CRISPR loci if present in the organism. The protein is Ribonuclease 3 of Shewanella sediminis (strain HAW-EB3).